We begin with the raw amino-acid sequence, 156 residues long: MKFNDVYNKHHKIIHHLLKKYNISYNYDEYYQLLLIKMWQLSQIYKPSSNQSLSSFLFMRLNFYLIDLFRQQKRLNDIILCENHSPILTEQPTYFNEYDLRLQDVCALLNHRERQWLMLYLEGYKQYEIADIMSLSTSTIKLIKASVKRKCQRFFK.

The Polymerase core binding motif lies at 29 to 44 (EYYQLLLIKMWQLSQI). The segment at residues 126–145 (QYEIADIMSLSTSTIKLIKA) is a DNA-binding region (H-T-H motif).

It belongs to the sigma-70 factor family.

Functionally, sigma factors are initiation factors that promote the attachment of RNA polymerase to specific initiation sites and are then released. Sigma-S contributes to the protection against external stress, thus playing a role in cellular fitness and survival. The protein is RNA polymerase sigma factor SigS (sigS) of Staphylococcus aureus (strain MRSA252).